A 317-amino-acid chain; its full sequence is Malate dehydrogenase (317 aa).

NAD(+) is bound by residues 15-20 (GSGNIG) and D39. Substrate is bound by residues R88 and R94. NAD(+)-binding positions include N101 and 124 to 126 (VTN). N126 and R157 together coordinate substrate. The active-site Proton acceptor is the H181.

Belongs to the LDH/MDH superfamily. MDH type 3 family.

The enzyme catalyses (S)-malate + NAD(+) = oxaloacetate + NADH + H(+). In terms of biological role, catalyzes the reversible oxidation of malate to oxaloacetate. The polypeptide is Malate dehydrogenase (Ehrlichia ruminantium (strain Gardel)).